Here is a 430-residue protein sequence, read N- to C-terminus: S-adenosylmethionine synthase (430 aa).

Residue histidine 14 coordinates ATP. Aspartate 16 serves as a coordination point for Mg(2+). Glutamate 42 contributes to the K(+) binding site. Glutamate 55 and glutamine 98 together coordinate L-methionine. Residues 98-108 (QSADINRGVER) form a flexible loop region. ATP is bound by residues 164 to 166 (DAK), 254 to 255 (KF), aspartate 263, 269 to 270 (RK), alanine 286, and lysine 290. Aspartate 263 serves as a coordination point for L-methionine. Residue lysine 294 participates in L-methionine binding.

Belongs to the AdoMet synthase family. In terms of assembly, homotetramer; dimer of dimers. Requires Mg(2+) as cofactor. The cofactor is K(+).

The protein resides in the cytoplasm. The enzyme catalyses L-methionine + ATP + H2O = S-adenosyl-L-methionine + phosphate + diphosphate. Its pathway is amino-acid biosynthesis; S-adenosyl-L-methionine biosynthesis; S-adenosyl-L-methionine from L-methionine: step 1/1. Its function is as follows. Catalyzes the formation of S-adenosylmethionine (AdoMet) from methionine and ATP. The overall synthetic reaction is composed of two sequential steps, AdoMet formation and the subsequent tripolyphosphate hydrolysis which occurs prior to release of AdoMet from the enzyme. The protein is S-adenosylmethionine synthase of Bacteroides fragilis (strain ATCC 25285 / DSM 2151 / CCUG 4856 / JCM 11019 / LMG 10263 / NCTC 9343 / Onslow / VPI 2553 / EN-2).